Here is a 355-residue protein sequence, read N- to C-terminus: Uroporphyrinogen decarboxylase (355 aa).

Substrate is bound by residues 27-31, aspartate 77, tyrosine 154, threonine 209, and histidine 328; that span reads RQAGR.

It belongs to the uroporphyrinogen decarboxylase family. Homodimer.

The protein resides in the cytoplasm. It carries out the reaction uroporphyrinogen III + 4 H(+) = coproporphyrinogen III + 4 CO2. It participates in porphyrin-containing compound metabolism; protoporphyrin-IX biosynthesis; coproporphyrinogen-III from 5-aminolevulinate: step 4/4. In terms of biological role, catalyzes the decarboxylation of four acetate groups of uroporphyrinogen-III to yield coproporphyrinogen-III. In Aliivibrio fischeri (strain ATCC 700601 / ES114) (Vibrio fischeri), this protein is Uroporphyrinogen decarboxylase.